The following is a 197-amino-acid chain: Recombination protein RecR (197 aa).

Residues 57–72 (CSVCFGITEDDPCHLC) form a C4-type zinc finger. The Toprim domain maps to 79-174 (TTICVVEEPQ…RVTRLAHGIP (96 aa)).

This sequence belongs to the RecR family.

Functionally, may play a role in DNA repair. It seems to be involved in an RecBC-independent recombinational process of DNA repair. It may act with RecF and RecO. The chain is Recombination protein RecR from Geotalea daltonii (strain DSM 22248 / JCM 15807 / FRC-32) (Geobacter daltonii).